We begin with the raw amino-acid sequence, 228 residues long: Archaeal flagellar ATP-binding protein FlaH (228 aa).

Gly-30, Thr-31, Lys-33, Ser-34, Val-35, Glu-57, and Lys-191 together coordinate ATP. A Mg(2+)-binding site is contributed by Ser-34. Position 57 (Glu-57) interacts with Mg(2+).

The protein belongs to the FlaH family. The S.acidocaldarius archaellum assembly machinery and its filament consist of seven proteins (FlaB, FlaF, FlaG, FlaH, FlaI, FlaJ and FlaX). Interacts directly with the FlaX ring and the motor ATPase FlaI. Monomers, which can probably form homohexamers upon binding to ATP. In vitro, FlaH assembles as a second ring inside the FlaX ring.

The protein localises to the archaeal flagellum. It localises to the cytoplasm. Functionally, component of the archaellum. FlaX, FlaH and FlaI form the core cytoplasmic motor complex of the crenarchaeal archaellum. FlaH binds ATP with high affinity but lacks detectable in vitro ATPase activity. ATP binding is essential for interaction with FlaI and for archaellum assembly. This is Archaeal flagellar ATP-binding protein FlaH from Sulfolobus acidocaldarius (strain ATCC 33909 / DSM 639 / JCM 8929 / NBRC 15157 / NCIMB 11770).